The chain runs to 398 residues: 8-amino-7-oxononanoate synthase (398 aa).

Arginine 23 is a substrate binding site. Residue 110–111 (GY) participates in pyridoxal 5'-phosphate binding. Histidine 135 contacts substrate. Pyridoxal 5'-phosphate contacts are provided by serine 181, histidine 209, and threonine 238. Lysine 241 bears the N6-(pyridoxal phosphate)lysine mark. Threonine 355 contacts substrate.

The protein belongs to the class-II pyridoxal-phosphate-dependent aminotransferase family. BioF subfamily. In terms of assembly, homodimer. Pyridoxal 5'-phosphate serves as cofactor.

The catalysed reaction is 6-carboxyhexanoyl-[ACP] + L-alanine + H(+) = (8S)-8-amino-7-oxononanoate + holo-[ACP] + CO2. It functions in the pathway cofactor biosynthesis; biotin biosynthesis. Its function is as follows. Catalyzes the decarboxylative condensation of pimeloyl-[acyl-carrier protein] and L-alanine to produce 8-amino-7-oxononanoate (AON), [acyl-carrier protein], and carbon dioxide. The sequence is that of 8-amino-7-oxononanoate synthase from Cellvibrio japonicus (strain Ueda107) (Pseudomonas fluorescens subsp. cellulosa).